The chain runs to 396 residues: Cytochrome b (396 aa).

4 helical membrane-spanning segments follow: residues 32 to 52 (FGSLLGVNLVILIISGLTLAM), 76 to 98 (WLLRYIHANGASFFFIWVYLHIG), 113 to 133 (LWSIGVVIFILMMATAFIGYV), and 179 to 199 (FFSLHYLLPFILAALVVMHLL). Heme b-binding residues include H82 and H96. Heme b-binding residues include H183 and H197. H202 contacts a ubiquinone. The next 4 helical transmembrane spans lie at 225-245 (FTSKDLVGFVWMAILLSIFVF), 289-309 (LGGVIAMFGALLILFPLALIH), 321-341 (LLNLLFWIFVFNFFVLLWVGA), and 348-368 (YILIGQISTIIYFLYFVILMI).

The protein belongs to the cytochrome b family. Fungal cytochrome b-c1 complex contains 10 subunits; 3 respiratory subunits, 2 core proteins and 5 low-molecular weight proteins. Cytochrome b-c1 complex is a homodimer. Heme b is required as a cofactor.

It is found in the mitochondrion inner membrane. Its function is as follows. Component of the ubiquinol-cytochrome c reductase complex (complex III or cytochrome b-c1 complex) that is part of the mitochondrial respiratory chain. The b-c1 complex mediates electron transfer from ubiquinol to cytochrome c. Contributes to the generation of a proton gradient across the mitochondrial membrane that is then used for ATP synthesis. The protein is Cytochrome b (cob) of Spizellomyces punctatus.